Here is a 149-residue protein sequence, read N- to C-terminus: Large ribosomal subunit protein bL9 (149 aa).

This sequence belongs to the bacterial ribosomal protein bL9 family.

Binds to the 23S rRNA. The chain is Large ribosomal subunit protein bL9 from Thermotoga petrophila (strain ATCC BAA-488 / DSM 13995 / JCM 10881 / RKU-1).